Here is a 175-residue protein sequence, read N- to C-terminus: Peptide deformylase (175 aa).

Residues Cys-96 and His-138 each contribute to the Fe cation site. The active site involves Glu-139. His-142 provides a ligand contact to Fe cation.

This sequence belongs to the polypeptide deformylase family. Requires Fe(2+) as cofactor.

It carries out the reaction N-terminal N-formyl-L-methionyl-[peptide] + H2O = N-terminal L-methionyl-[peptide] + formate. Removes the formyl group from the N-terminal Met of newly synthesized proteins. Requires at least a dipeptide for an efficient rate of reaction. N-terminal L-methionine is a prerequisite for activity but the enzyme has broad specificity at other positions. The polypeptide is Peptide deformylase (Rhodopseudomonas palustris (strain BisB5)).